Consider the following 501-residue polypeptide: Pyruvate dehydrogenase protein X component, mitochondrial (501 aa).

Residues 1-53 (MAASWRLHCNQPLLRYLLGFSSRRSLGLAQGAAAWPVDRGASWRWFHSTQLLQ) constitute a mitochondrion transit peptide. Positions 56-132 (PIKVLMPSLS…QLGSLIALMV (77 aa)) constitute a Lipoyl-binding domain. Residue K97 is modified to N6-lipoyllysine. A disordered region spans residues 145–176 (KDVSAPPPVSKPPAPTQPSPQPQIPCPARKEH). Positions 149–169 (APPPVSKPPAPTQPSPQPQIP) are enriched in pro residues. The region spanning 183–220 (RLSPAARNILEKHSLDASQGTATGPRGIFTKEDALKLV) is the Peripheral subunit-binding (PSBD) domain. K194 is modified (N6-acetyllysine). The residue at position 196 (S196) is a Phosphoserine. Residues 228-256 (ITESRPASAPPPSLSASVPPQATAGPSYP) are disordered. K394 is modified (N6-succinyllysine).

Belongs to the 2-oxoacid dehydrogenase family. In terms of assembly, part of the inner core of the multimeric pyruvate dehydrogenase complex that is composed of about 48 DLAT and 12 PDHX molecules. This core binds multiple copies of pyruvate dehydrogenase (subunits PDH1A and PDHB, E1), dihydrolipoamide acetyltransferase (DLAT, E2) and lipoamide dehydrogenase (DLD, E3). Interacts with SIRT4. Interacts with DLD. Post-translationally, delipoylated at Lys-97 by SIRT4, delipoylation decreases the PHD complex activity.

It localises to the mitochondrion matrix. In terms of biological role, required for anchoring dihydrolipoamide dehydrogenase (E3) to the dihydrolipoamide transacetylase (E2) core of the pyruvate dehydrogenase complexes of eukaryotes. This specific binding is essential for a functional PDH complex. The chain is Pyruvate dehydrogenase protein X component, mitochondrial (Pdhx) from Mus musculus (Mouse).